The following is a 424-amino-acid chain: Serine hydroxymethyltransferase (424 aa).

(6S)-5,6,7,8-tetrahydrofolate-binding positions include Leu-119 and 123-125 (GHL). The residue at position 228 (Lys-228) is an N6-(pyridoxal phosphate)lysine. 353–355 (SAF) serves as a coordination point for (6S)-5,6,7,8-tetrahydrofolate.

This sequence belongs to the SHMT family. In terms of assembly, homodimer. Pyridoxal 5'-phosphate is required as a cofactor.

It localises to the cytoplasm. It carries out the reaction (6R)-5,10-methylene-5,6,7,8-tetrahydrofolate + glycine + H2O = (6S)-5,6,7,8-tetrahydrofolate + L-serine. It participates in one-carbon metabolism; tetrahydrofolate interconversion. It functions in the pathway amino-acid biosynthesis; glycine biosynthesis; glycine from L-serine: step 1/1. Its function is as follows. Catalyzes the reversible interconversion of serine and glycine with tetrahydrofolate (THF) serving as the one-carbon carrier. Also exhibits THF-independent aldolase activity toward beta-hydroxyamino acids, producing glycine and aldehydes, via a retro-aldol mechanism. This Natronomonas pharaonis (strain ATCC 35678 / DSM 2160 / CIP 103997 / JCM 8858 / NBRC 14720 / NCIMB 2260 / Gabara) (Halobacterium pharaonis) protein is Serine hydroxymethyltransferase.